Reading from the N-terminus, the 193-residue chain is Probable nicotinate-nucleotide adenylyltransferase (193 aa).

The protein belongs to the NadD family.

It catalyses the reaction nicotinate beta-D-ribonucleotide + ATP + H(+) = deamido-NAD(+) + diphosphate. It participates in cofactor biosynthesis; NAD(+) biosynthesis; deamido-NAD(+) from nicotinate D-ribonucleotide: step 1/1. In terms of biological role, catalyzes the reversible adenylation of nicotinate mononucleotide (NaMN) to nicotinic acid adenine dinucleotide (NaAD). This Flavobacterium johnsoniae (strain ATCC 17061 / DSM 2064 / JCM 8514 / BCRC 14874 / CCUG 350202 / NBRC 14942 / NCIMB 11054 / UW101) (Cytophaga johnsonae) protein is Probable nicotinate-nucleotide adenylyltransferase.